Consider the following 1181-residue polypeptide: Poly [ADP-ribose] polymerase tankyrase (1181 aa).

ANK repeat units follow at residues 56 to 85, 89 to 118, 122 to 151, 209 to 238, 242 to 271, 275 to 304, 362 to 394, 398 to 427, 431 to 458, 483 to 513, 519 to 548, 552 to 581, 585 to 614, 638 to 668, 672 to 701, 705 to 734, 738 to 767, and 771 to 799; these read RKST…SIQA, GGLH…SPNT, WNYT…NHTI, RRST…DVHA, GGLV…NVNA, WAFT…DPTL, TGDT…LLNE, AFLT…KVNA, LGQT…DTNI, DSET…SVNC, RHST…EVYA, GGLV…NVNV, WKFT…DPMK, RGPS…NCRD, RNST…DVNA, GGLI…VVNA, WGFT…DAYM, and EGQT…LSQQ. Disordered regions lie at residues 807–834 and 864–886; these read SLTS…SAIL and RISP…DLLP. Residues 889–952 enclose the SAM domain; the sequence is DTITNVSGFL…LKGIAQLRST (64 aa). The region spanning 969-1174 is the PARP catalytic domain; sequence LPDDKEFVAV…YQIVKPDDSS (206 aa). Positions 1091, 1094, 1099, and 1102 each coordinate Zn(2+).

This sequence belongs to the ARTD/PARP family. As to quaternary structure, interacts (via ANK repeats) with PI31.

The enzyme catalyses NAD(+) + (ADP-D-ribosyl)n-acceptor = nicotinamide + (ADP-D-ribosyl)n+1-acceptor + H(+).. The catalysed reaction is L-aspartyl-[protein] + NAD(+) = 4-O-(ADP-D-ribosyl)-L-aspartyl-[protein] + nicotinamide. It catalyses the reaction L-glutamyl-[protein] + NAD(+) = 5-O-(ADP-D-ribosyl)-L-glutamyl-[protein] + nicotinamide. In terms of biological role, stimulates proteasome activity, probably by ADP-ribosylation of PI31. Modulates 26S proteasome assembly. This Drosophila melanogaster (Fruit fly) protein is Poly [ADP-ribose] polymerase tankyrase.